The following is a 186-amino-acid chain: Elongation factor P (186 aa).

The protein belongs to the elongation factor P family.

The protein resides in the cytoplasm. It participates in protein biosynthesis; polypeptide chain elongation. Functionally, involved in peptide bond synthesis. Stimulates efficient translation and peptide-bond synthesis on native or reconstituted 70S ribosomes in vitro. Probably functions indirectly by altering the affinity of the ribosome for aminoacyl-tRNA, thus increasing their reactivity as acceptors for peptidyl transferase. The polypeptide is Elongation factor P (Clostridium acetobutylicum (strain ATCC 824 / DSM 792 / JCM 1419 / IAM 19013 / LMG 5710 / NBRC 13948 / NRRL B-527 / VKM B-1787 / 2291 / W)).